The primary structure comprises 330 residues: Probable cytosolic iron-sulfur protein assembly protein 1 (330 aa).

7 WD repeats span residues 12–49 (LYKE…FTLI), 56–95 (AHKK…DRTF), 105–144 (GHEN…EEYE), 151–190 (EHSQ…WECV), 195–236 (GHEG…EDDQ), 248–286 (VHKR…WKVF), and 292–330 (CHGV…EKAA).

Belongs to the WD repeat CIA1 family. As to quaternary structure, interacts with NAR1.

It localises to the cytoplasm. The protein resides in the nucleus. Functionally, essential component of the cytosolic iron-sulfur (Fe/S) protein assembly machinery. Required for the maturation of extramitochondrial Fe/S proteins. The sequence is that of Probable cytosolic iron-sulfur protein assembly protein 1 from Saccharomyces cerevisiae (strain YJM789) (Baker's yeast).